Here is a 111-residue protein sequence, read N- to C-terminus: Photosystem II reaction center Psb28 protein (111 aa).

It belongs to the Psb28 family. As to quaternary structure, part of the photosystem II complex.

The protein localises to the cellular thylakoid membrane. The chain is Photosystem II reaction center Psb28 protein from Nostoc sp. (strain PCC 7120 / SAG 25.82 / UTEX 2576).